We begin with the raw amino-acid sequence, 332 residues long: Tetraacyldisaccharide 4'-kinase (332 aa).

Residue 60-67 (TVGGTGKT) participates in ATP binding.

This sequence belongs to the LpxK family.

It carries out the reaction a lipid A disaccharide + ATP = a lipid IVA + ADP + H(+). Its pathway is glycolipid biosynthesis; lipid IV(A) biosynthesis; lipid IV(A) from (3R)-3-hydroxytetradecanoyl-[acyl-carrier-protein] and UDP-N-acetyl-alpha-D-glucosamine: step 6/6. Transfers the gamma-phosphate of ATP to the 4'-position of a tetraacyldisaccharide 1-phosphate intermediate (termed DS-1-P) to form tetraacyldisaccharide 1,4'-bis-phosphate (lipid IVA). The sequence is that of Tetraacyldisaccharide 4'-kinase from Pseudomonas paraeruginosa (strain DSM 24068 / PA7) (Pseudomonas aeruginosa (strain PA7)).